The sequence spans 210 residues: Ribosomal RNA large subunit methyltransferase E (210 aa).

5 residues coordinate S-adenosyl-L-methionine: glycine 55, tryptophan 57, aspartate 75, aspartate 93, and aspartate 117. Residue lysine 157 is the Proton acceptor of the active site. The disordered stretch occupies residues 175 to 210; that stretch reads YRQVKTTKPPSSRKKSSEMYVVGLDFKPKKNKKSKD.

The protein belongs to the class I-like SAM-binding methyltransferase superfamily. RNA methyltransferase RlmE family.

It localises to the cytoplasm. The catalysed reaction is uridine(2552) in 23S rRNA + S-adenosyl-L-methionine = 2'-O-methyluridine(2552) in 23S rRNA + S-adenosyl-L-homocysteine + H(+). Specifically methylates the uridine in position 2552 of 23S rRNA at the 2'-O position of the ribose in the fully assembled 50S ribosomal subunit. The polypeptide is Ribosomal RNA large subunit methyltransferase E (Methanobrevibacter smithii (strain ATCC 35061 / DSM 861 / OCM 144 / PS)).